We begin with the raw amino-acid sequence, 179 residues long: uncharacterized protein (179 aa).

An N-terminal signal peptide occupies residues 1-27 (MNKSMIQSGGYVLLAGLILAMSSTLFA). Cys-43 and Cys-83 are oxidised to a cystine.

This sequence belongs to the fimbrial protein family.

It localises to the fimbrium. In terms of biological role, part of the yfcOPQRSUV fimbrial operon. Could contribute to adhesion to various surfaces in specific environmental niches. Increases adhesion to eukaryotic T24 bladder epithelial cells in the absence of fim genes. This is an uncharacterized protein from Escherichia coli (strain K12).